Here is a 22-residue protein sequence, read N- to C-terminus: QGYGFNEPEQTRNQGGSSWEAP.

A disordered region spans residues 1–22 (QGYGFNEPEQTRNQGGSSWEAP). Residues 11 to 22 (TRNQGGSSWEAP) show a composition bias toward polar residues.

This sequence belongs to the AKAP95 family.

The protein localises to the nucleus matrix. Probable transcriptional activator which may play a role in neuronal differentiation. Able to bind DNA and activate expression in vitro. This is Zinc finger protein 326 (Znf326) from Rattus norvegicus (Rat).